A 225-amino-acid polypeptide reads, in one-letter code: Biosynthetic peptidoglycan transglycosylase (225 aa).

The helical transmembrane segment at 7–27 threads the bilayer; sequence SFLFKMVLILLIAPIVLVGVV.

The protein belongs to the glycosyltransferase 51 family.

The protein resides in the cell inner membrane. The enzyme catalyses [GlcNAc-(1-&gt;4)-Mur2Ac(oyl-L-Ala-gamma-D-Glu-L-Lys-D-Ala-D-Ala)](n)-di-trans,octa-cis-undecaprenyl diphosphate + beta-D-GlcNAc-(1-&gt;4)-Mur2Ac(oyl-L-Ala-gamma-D-Glu-L-Lys-D-Ala-D-Ala)-di-trans,octa-cis-undecaprenyl diphosphate = [GlcNAc-(1-&gt;4)-Mur2Ac(oyl-L-Ala-gamma-D-Glu-L-Lys-D-Ala-D-Ala)](n+1)-di-trans,octa-cis-undecaprenyl diphosphate + di-trans,octa-cis-undecaprenyl diphosphate + H(+). It participates in cell wall biogenesis; peptidoglycan biosynthesis. Its function is as follows. Peptidoglycan polymerase that catalyzes glycan chain elongation from lipid-linked precursors. The polypeptide is Biosynthetic peptidoglycan transglycosylase (Vibrio parahaemolyticus serotype O3:K6 (strain RIMD 2210633)).